The sequence spans 907 residues: DNA mismatch repair protein MutS (907 aa).

Residue 656 to 663 (GPNMAGKS) participates in ATP binding.

This sequence belongs to the DNA mismatch repair MutS family.

In terms of biological role, this protein is involved in the repair of mismatches in DNA. It is possible that it carries out the mismatch recognition step. This protein has a weak ATPase activity. The sequence is that of DNA mismatch repair protein MutS from Nitrobacter hamburgensis (strain DSM 10229 / NCIMB 13809 / X14).